A 625-amino-acid polypeptide reads, in one-letter code: DNA-directed RNA polymerase subunit gamma (625 aa).

Residues C71, C73, C86, and C89 each coordinate Zn(2+). Residues D467, D469, and D471 each coordinate Mg(2+).

It belongs to the RNA polymerase beta' chain family. RpoC1 subfamily. As to quaternary structure, in cyanobacteria the RNAP catalytic core is composed of 2 alpha, 1 beta, 1 beta', 1 gamma and 1 omega subunit. When a sigma factor is associated with the core the holoenzyme is formed, which can initiate transcription. Mg(2+) is required as a cofactor. Requires Zn(2+) as cofactor.

The catalysed reaction is RNA(n) + a ribonucleoside 5'-triphosphate = RNA(n+1) + diphosphate. Its function is as follows. DNA-dependent RNA polymerase catalyzes the transcription of DNA into RNA using the four ribonucleoside triphosphates as substrates. The protein is DNA-directed RNA polymerase subunit gamma of Rippkaea orientalis (strain PCC 8801 / RF-1) (Cyanothece sp. (strain PCC 8801)).